Consider the following 254-residue polypeptide: Type III pantothenate kinase (254 aa).

Methionine 13–histidine 20 lines the ATP pocket. Substrate-binding positions include tyrosine 84 and glycine 88–arginine 91. Aspartate 90 functions as the Proton acceptor in the catalytic mechanism. Aspartate 110 lines the K(+) pocket. Threonine 113 contributes to the ATP binding site. Threonine 166 lines the substrate pocket.

This sequence belongs to the type III pantothenate kinase family. Homodimer. The cofactor is NH4(+). K(+) is required as a cofactor.

The protein localises to the cytoplasm. The enzyme catalyses (R)-pantothenate + ATP = (R)-4'-phosphopantothenate + ADP + H(+). Its pathway is cofactor biosynthesis; coenzyme A biosynthesis; CoA from (R)-pantothenate: step 1/5. Functionally, catalyzes the phosphorylation of pantothenate (Pan), the first step in CoA biosynthesis. The chain is Type III pantothenate kinase from Thermosynechococcus vestitus (strain NIES-2133 / IAM M-273 / BP-1).